Reading from the N-terminus, the 394-residue chain is Na(+)/H(+) antiporter NhaA (394 aa).

11 helical membrane-spanning segments follow: residues 11-31 (LEAA…IFAN), 59-79 (LLMW…GMEV), 95-115 (IFPA…YWFI), 125-145 (GWAI…ALLS), 155-175 (FLLA…ALFF), 177-197 (HEMS…LVAM), 203-220 (TGLI…ASVL), 254-274 (ALAP…NAGV), 296-316 (LIIG…LLGI), 328-348 (IFAI…IAGL), and 365-385 (LGIL…LKIT).

It belongs to the NhaA Na(+)/H(+) (TC 2.A.33) antiporter family.

It localises to the cell inner membrane. The enzyme catalyses Na(+)(in) + 2 H(+)(out) = Na(+)(out) + 2 H(+)(in). Na(+)/H(+) antiporter that extrudes sodium in exchange for external protons. This Actinobacillus pleuropneumoniae serotype 7 (strain AP76) protein is Na(+)/H(+) antiporter NhaA.